The following is a 795-amino-acid chain: Phenylalanine--tRNA ligase beta subunit (795 aa).

Residues 39-148 (AGRFTGVVVG…AEAPIGQDIR (110 aa)) form the tRNA-binding domain. One can recognise a B5 domain in the interval 401–476 (PQPATITLRR…RVYGYDAIPN (76 aa)). 4 residues coordinate Mg(2+): Asp-454, Asp-460, Glu-463, and Glu-464. One can recognise an FDX-ACB domain in the interval 701–794 (SRFPANRRDI…LKQRFQASLR (94 aa)).

The protein belongs to the phenylalanyl-tRNA synthetase beta subunit family. Type 1 subfamily. In terms of assembly, tetramer of two alpha and two beta subunits. Requires Mg(2+) as cofactor.

Its subcellular location is the cytoplasm. The catalysed reaction is tRNA(Phe) + L-phenylalanine + ATP = L-phenylalanyl-tRNA(Phe) + AMP + diphosphate + H(+). In Sodalis glossinidius (strain morsitans), this protein is Phenylalanine--tRNA ligase beta subunit.